The following is a 592-amino-acid chain: MGEQLNGLKRTHMCGELTVEDVDKSVVVMGWVQRRRDHGGLVFIDLRDRTGIVQVVFSNEVSSEAFEKVQSVRSEYVLAIEGKVVKRAPENVNPKISTGEIEIYANTLKILSKSETPPFPIEDRSNVSEAIRLKYRYLDLRRPSMQQNLMTRFKITKVVRDFLNRNGFIEIETPLLIKSTPEGARDYLVPSRIYPGKFYALPQSPQIFKQLLMISGFDKYYQIAKCLRDEDLRADRQPEFTQIDIEMSFVEVEDVLKINEKMIAEIFKETLGIDVPIPFKRLSYQESMERFGTDKPDLRFGMELKDLSDIVAQSEFNVFKTALKNNGSVRGINVKGAASMPRRQLDELVEFAKTYGAKGLLWIQVFEKEVKSPATKFLSEEEMKKILERLEAEAGDLLLIVADKDEIVFDTLAHLRLELGKRFNLIDENKYEFVWIVDFPLLEYDEGEKRYVAKHHPFTAPKDEDIELLEKEPLKVRAKAYDIVLNGTEIGGGSIRIHDTELQKRMFKVLGFSEEKAWERFGFLMEAFKYGAPPHGGIAYGLDRLAMIITGSDTIRDVIAFPKTQNAVCLMTDAPSEVSEEQLKELHIKVDL.

Glu-182 provides a ligand contact to L-aspartate. The segment at 206–209 is aspartate; it reads QIFK. Arg-228 is an L-aspartate binding site. ATP is bound by residues 228–230 and Gln-237; that span reads RDE. His-455 contributes to the L-aspartate binding site. An ATP-binding site is contributed by Glu-489. Arg-496 lines the L-aspartate pocket. 541–544 provides a ligand contact to ATP; it reads GLDR.

The protein belongs to the class-II aminoacyl-tRNA synthetase family. Type 1 subfamily. In terms of assembly, homodimer.

The protein resides in the cytoplasm. The catalysed reaction is tRNA(Asx) + L-aspartate + ATP = L-aspartyl-tRNA(Asx) + AMP + diphosphate. Aspartyl-tRNA synthetase with relaxed tRNA specificity since it is able to aspartylate not only its cognate tRNA(Asp) but also tRNA(Asn). Reaction proceeds in two steps: L-aspartate is first activated by ATP to form Asp-AMP and then transferred to the acceptor end of tRNA(Asp/Asn). In Thermoanaerobacter pseudethanolicus (strain ATCC 33223 / 39E) (Clostridium thermohydrosulfuricum), this protein is Aspartate--tRNA(Asp/Asn) ligase.